A 188-amino-acid polypeptide reads, in one-letter code: Cytidylate kinase (188 aa).

7 to 15 (GKIGSGKST) serves as a coordination point for ATP.

This sequence belongs to the cytidylate kinase family. Type 2 subfamily.

The protein localises to the cytoplasm. The catalysed reaction is CMP + ATP = CDP + ADP. It catalyses the reaction dCMP + ATP = dCDP + ADP. The sequence is that of Cytidylate kinase (cmk) from Thermoplasma acidophilum (strain ATCC 25905 / DSM 1728 / JCM 9062 / NBRC 15155 / AMRC-C165).